Reading from the N-terminus, the 233-residue chain is Glucosamine-6-phosphate deaminase (233 aa).

Asp-62 (proton acceptor; for enolization step) is an active-site residue. Asn-128 serves as the catalytic For ring-opening step. Residue His-130 is the Proton acceptor; for ring-opening step of the active site. Glu-135 acts as the For ring-opening step in catalysis.

This sequence belongs to the glucosamine/galactosamine-6-phosphate isomerase family. NagB subfamily.

The enzyme catalyses alpha-D-glucosamine 6-phosphate + H2O = beta-D-fructose 6-phosphate + NH4(+). The protein operates within amino-sugar metabolism; N-acetylneuraminate degradation; D-fructose 6-phosphate from N-acetylneuraminate: step 5/5. Catalyzes the reversible isomerization-deamination of glucosamine 6-phosphate (GlcN6P) to form fructose 6-phosphate (Fru6P) and ammonium ion. The chain is Glucosamine-6-phosphate deaminase from Enterococcus faecalis (strain ATCC 700802 / V583).